Here is a 294-residue protein sequence, read N- to C-terminus: RAB7A-interacting MON1-CCZ1 complex subunit 1 (294 aa).

The residue at position 2 (A2) is an N-acetylalanine.

This sequence belongs to the RIMOC1 family. As to quaternary structure, interacts with the MON1A-CCZ1B complex. Interacts with GDP-bound RAB7A and promotes its interaction with the MON1A-CCZ1B complex.

It is found in the cytoplasm. The protein localises to the cytosol. Functionally, plays an important role in the removal of damaged mitochondria via mitophagy by controlling the stability and localization of RAB7A. Required for the recruitment of RAB7A and ATG9A vesicles to damaged mitochondria and promotes the stability of RAB7A by inhibiting its proteasomal degradation during mitophagy. This is RAB7A-interacting MON1-CCZ1 complex subunit 1 from Homo sapiens (Human).